The primary structure comprises 554 residues: Protein PNS1 (554 aa).

Low complexity-rich tracts occupy residues 1–19 and 27–45; these read MSGP…NNNN and SYQM…QPQY. The interval 1 to 90 is disordered; the sequence is MSGPQYGAQP…TDGYGGPPPS (90 aa). Residues 1–105 lie on the Cytoplasmic side of the membrane; that stretch reads MSGPQYGAQP…KVQKPKYNDW (105 aa). Residues 68–90 are compositionally biased toward pro residues; sequence PQGPPPNGSKPPPTDGYGGPPPS. Residues 106-126 traverse the membrane as a helical segment; that stretch reads WAGLLFLATVAGFVAVSAISI. Topologically, residues 127–153 are extracellular; it reads HGYADNRSQNNGSLNGQRNTFGLTTHT. 2 N-linked (GlcNAc...) asparagine glycosylation sites follow: Asn132 and Asn137. Residues 154-174 form a helical membrane-spanning segment; that stretch reads IYLFVWVLICAIVLSYAYMWM. Residues 175–181 lie on the Cytoplasmic side of the membrane; the sequence is ARKFTKQ. The chain crosses the membrane as a helical span at residues 182-202; sequence FIYATGILNIVMGLVTALYML. Topologically, residues 203–206 are extracellular; the sequence is SRKY. Residues 207–227 traverse the membrane as a helical segment; it reads WSGGIVFLIFVVLQALFFWSC. Residues 228–255 lie on the Cytoplasmic side of the membrane; the sequence is RSRIPFSTLMLQTAIDVSKVHGHVYLVS. Residues 256–276 form a helical membrane-spanning segment; the sequence is AVGGVIGTLFAAYWAITLVAV. The Extracellular portion of the chain corresponds to 277–297; that stretch reads YVKFEPDPNNAACRNAGGCSS. Residues 298–318 form a helical membrane-spanning segment; sequence GKVIGLIVFITFAGYWISEWL. Over 319–352 the chain is Cytoplasmic; sequence KNTIHTTVAGIYGSWYFNSRNYPTKVTRGALKRS. A helical membrane pass occupies residues 353–373; it reads LTYSFGSISLGSLFIAIINLI. Over 374 to 389 the chain is Extracellular; it reads RQLAQAAQQNAAQEGD. A helical transmembrane segment spans residues 390–410; sequence ILGTILWCIFGCLIGILDWLV. At 411 to 451 the chain is on the cytoplasmic side; the sequence is EFINRYAFCHIALYGKAYFAAAKDTWKMVKDRGIDALINEC. A helical transmembrane segment spans residues 452–472; sequence LIGPVLTFGATFVAYACGLIA. Residues 473–487 lie on the Extracellular side of the membrane; it reads YLYMVYTKPAYNDGG. A helical transmembrane segment spans residues 488–508; that stretch reads GFTPVVVAFAFLIGLQVCNVF. Topologically, residues 509–554 are cytoplasmic; that stretch reads TTPLTSGIDTIFVAMAWDPEVLMRDHPDLYHRMVQVYPHVQEAIHA.

Belongs to the CTL (choline transporter-like) family.

Its subcellular location is the cell membrane. Probably involved in transport through the plasma membrane. This Neurospora crassa (strain ATCC 24698 / 74-OR23-1A / CBS 708.71 / DSM 1257 / FGSC 987) protein is Protein PNS1 (pns-1).